A 577-amino-acid polypeptide reads, in one-letter code: Aspartate--tRNA(Asp/Asn) ligase (577 aa).

Residue glutamate 171 participates in L-aspartate binding. An aspartate region spans residues 195-198 (QLFK). Arginine 217 contributes to the L-aspartate binding site. Residues 217 to 219 (RDE) and glutamine 226 each bind ATP. Histidine 444 contributes to the L-aspartate binding site. Glutamate 474 is an ATP binding site. Residue arginine 481 participates in L-aspartate binding. 526–529 (GFDR) lines the ATP pocket.

This sequence belongs to the class-II aminoacyl-tRNA synthetase family. Type 1 subfamily. In terms of assembly, homodimer.

It is found in the cytoplasm. It carries out the reaction tRNA(Asx) + L-aspartate + ATP = L-aspartyl-tRNA(Asx) + AMP + diphosphate. Functionally, aspartyl-tRNA synthetase with relaxed tRNA specificity since it is able to aspartylate not only its cognate tRNA(Asp) but also tRNA(Asn). Is 1.7 times more efficient at aminoacylating tRNA(Asp) over tRNA(Asn). Reaction proceeds in two steps: L-aspartate is first activated by ATP to form Asp-AMP and then transferred to the acceptor end of tRNA(Asp/Asn). In Helicobacter pylori (strain ATCC 700392 / 26695) (Campylobacter pylori), this protein is Aspartate--tRNA(Asp/Asn) ligase.